A 437-amino-acid chain; its full sequence is Glutamyl-tRNA reductase (437 aa).

Residues 46-49, Ser97, 102-104, and Gln108 each bind substrate; these read TCNR and EEQ. Cys47 (nucleophile) is an active-site residue. Position 177–182 (177–182) interacts with NADP(+); that stretch reads GAGEMG. A disordered region spans residues 410 to 437; sequence NGRVSEGKDAKVEEGKPEVDVQRSKAES. Over residues 414 to 437 the composition is skewed to basic and acidic residues; the sequence is SEGKDAKVEEGKPEVDVQRSKAES.

This sequence belongs to the glutamyl-tRNA reductase family. In terms of assembly, homodimer.

It catalyses the reaction (S)-4-amino-5-oxopentanoate + tRNA(Glu) + NADP(+) = L-glutamyl-tRNA(Glu) + NADPH + H(+). Its pathway is porphyrin-containing compound metabolism; protoporphyrin-IX biosynthesis; 5-aminolevulinate from L-glutamyl-tRNA(Glu): step 1/2. Functionally, catalyzes the NADPH-dependent reduction of glutamyl-tRNA(Glu) to glutamate 1-semialdehyde (GSA). This is Glutamyl-tRNA reductase from Archaeoglobus fulgidus (strain ATCC 49558 / DSM 4304 / JCM 9628 / NBRC 100126 / VC-16).